Reading from the N-terminus, the 251-residue chain is SPbeta prophage-derived putative antirepressor protein YoqD (251 aa).

This is SPbeta prophage-derived putative antirepressor protein YoqD (yoqD) from Bacillus subtilis (strain 168).